The chain runs to 171 residues: uncharacterized protein (171 aa).

It belongs to the mimivirus L87/L94 family.

This is an uncharacterized protein from Acanthamoeba polyphaga (Amoeba).